The primary structure comprises 1235 residues: DNA polymerase catalytic subunit (1235 aa).

Disordered regions lie at residues 640–692 (QGRF…TAGR) and 1098–1134 (AAAPGDEPAPPAALPSPAKRPRETPSPADPPGGASKP). The span at 650–661 (APKRPAAAREDE) shows a compositional bias: basic and acidic residues. Positions 662–675 (ERPEEEGEDEDERE) are enriched in acidic residues. Positions 676 to 691 (EGGGEREPEGARETAG) are enriched in basic and acidic residues.

Belongs to the DNA polymerase type-B family. Forms a complex with the ssDNA-binding protein UL29, the DNA polymerase processivity factor, and the alkaline exonuclease. Interacts with the putative helicase-primase complex subunit UL8; this interaction may coordinate leading and lagging strand DNA synthesis at the replication fork.

It localises to the host nucleus. The catalysed reaction is DNA(n) + a 2'-deoxyribonucleoside 5'-triphosphate = DNA(n+1) + diphosphate. It carries out the reaction Endonucleolytic cleavage to 5'-phosphomonoester.. Its function is as follows. Replicates viral genomic DNA. The replication complex is composed of six viral proteins: the DNA polymerase, processivity factor, primase, primase-associated factor, helicase, and ssDNA-binding protein. Additionally, the polymerase contains an intrinsic ribonuclease H (RNase H) activity that specifically degrades RNA/DNA heteroduplexes or duplex DNA substrates in the 5' to 3' direction. Therefore, it can catalyze the excision of the RNA primers that initiate the synthesis of Okazaki fragments at a replication fork during viral DNA replication. This Homo sapiens (Human) protein is DNA polymerase catalytic subunit.